A 371-amino-acid chain; its full sequence is S-adenosylmethionine:tRNA ribosyltransferase-isomerase (371 aa).

It belongs to the QueA family. In terms of assembly, monomer.

The protein localises to the cytoplasm. The enzyme catalyses 7-aminomethyl-7-carbaguanosine(34) in tRNA + S-adenosyl-L-methionine = epoxyqueuosine(34) in tRNA + adenine + L-methionine + 2 H(+). The protein operates within tRNA modification; tRNA-queuosine biosynthesis. Transfers and isomerizes the ribose moiety from AdoMet to the 7-aminomethyl group of 7-deazaguanine (preQ1-tRNA) to give epoxyqueuosine (oQ-tRNA). In Rickettsia akari (strain Hartford), this protein is S-adenosylmethionine:tRNA ribosyltransferase-isomerase.